We begin with the raw amino-acid sequence, 557 residues long: Multidrug transporter FLR1 (557 aa).

3 N-linked (GlcNAc...) asparagine glycosylation sites follow: Asn-33, Asn-48, and Asn-106. Positions 44 to 57 are enriched in low complexity; that stretch reads SESSNMSFNSGSEE. The tract at residues 44–67 is disordered; that stretch reads SESSNMSFNSGSEENSQEKSVEDL. 8 consecutive transmembrane segments (helical) span residues 113–133, 149–169, 181–201, 204–224, 238–258, 271–291, 355–375, and 387–407; these read ALIIIQTMLLTCVNYMGSSIY, VVGTLNLSLYVLGYGLGPIVF, LPVYMITFFLFTMLQIGCALA, FAGLVILRFITGVLCSPALST, LALVLGLWSIGAVAAPVLAPL, WIFWLLFFCCCATMLLLTFFF, LYIALCYGAFYLFFEAFPIVF, and GLAYFGFCVGCIFAYIILLVF. Asn-418 is a glycosylation site (N-linked (GlcNAc...) asparagine). A run of 4 helical transmembrane segments spans residues 426 to 446, 450 to 470, 484 to 506, and 521 to 541; these read TLILAMCIGWCIPLALFMFGW, VHWILPIISEVFFVLGCFNIF, YVASVFAGNGFARSSFAAAFPLF, and VAWGSSLVGFFTIGLWVIPFV.

The protein belongs to the major facilitator superfamily.

The protein localises to the cell membrane. Multidrug transporter that confers resistance to 5-flucytosine (5-FC) and clotrimazole. Also confers resistance to benomyl, but not 4-nitroquinoline-N-oxide, cycloheximide, or fluconazole. Plays direct roles in extrusion of 5-flucytosine and clotrimazole. This chain is Multidrug transporter FLR1, found in Candida glabrata (strain ATCC 2001 / BCRC 20586 / JCM 3761 / NBRC 0622 / NRRL Y-65 / CBS 138) (Yeast).